Here is a 252-residue protein sequence, read N- to C-terminus: 3-dehydroquinate dehydratase (252 aa).

3-dehydroquinate contacts are provided by residues serine 21, 46–48, and arginine 82; that span reads EWR. The active-site Proton donor/acceptor is the histidine 143. Lysine 170 functions as the Schiff-base intermediate with substrate in the catalytic mechanism. 3-dehydroquinate is bound by residues arginine 213, serine 232, and glutamine 236.

It belongs to the type-I 3-dehydroquinase family. In terms of assembly, homodimer.

It catalyses the reaction 3-dehydroquinate = 3-dehydroshikimate + H2O. It functions in the pathway metabolic intermediate biosynthesis; chorismate biosynthesis; chorismate from D-erythrose 4-phosphate and phosphoenolpyruvate: step 3/7. In terms of biological role, involved in the third step of the chorismate pathway, which leads to the biosynthesis of aromatic amino acids. Catalyzes the cis-dehydration of 3-dehydroquinate (DHQ) and introduces the first double bond of the aromatic ring to yield 3-dehydroshikimate. This is 3-dehydroquinate dehydratase from Escherichia coli O8 (strain IAI1).